Reading from the N-terminus, the 191-residue chain is Ribosomal RNA small subunit methyltransferase G (191 aa).

S-adenosyl-L-methionine contacts are provided by residues Gly62, Phe67, Ile111–Glu112, and Arg124.

This sequence belongs to the methyltransferase superfamily. RNA methyltransferase RsmG family.

Its subcellular location is the cytoplasm. It carries out the reaction guanosine(527) in 16S rRNA + S-adenosyl-L-methionine = N(7)-methylguanosine(527) in 16S rRNA + S-adenosyl-L-homocysteine. Specifically methylates the N7 position of guanine in position 527 of 16S rRNA. This chain is Ribosomal RNA small subunit methyltransferase G, found in Rickettsia typhi (strain ATCC VR-144 / Wilmington).